The chain runs to 669 residues: Glutamate--cysteine ligase (669 aa).

The protein belongs to the glutamate--cysteine ligase type 3 family. Heterodimer of a catalytic heavy chain and a regulatory light chain.

The enzyme catalyses L-cysteine + L-glutamate + ATP = gamma-L-glutamyl-L-cysteine + ADP + phosphate + H(+). It participates in sulfur metabolism; glutathione biosynthesis; glutathione from L-cysteine and L-glutamate: step 1/2. Its function is as follows. Catalyzes the ATP-dependent ligation of L-glutamate and L-cysteine and participates in the first and rate-limiting step in glutathione biosynthesis. This chain is Glutamate--cysteine ligase (gcs1), found in Schizosaccharomyces pombe (strain 972 / ATCC 24843) (Fission yeast).